An 81-amino-acid polypeptide reads, in one-letter code: METLLNAIPQETLLVIGAYGALGAAYLVVIPLFLYFWMNRRWTVMGKLERLGIYGLVFLFFPGLILFAPFLNLRMSGQGDV.

Helical transmembrane passes span 13-33 and 51-71; these read LLVI…IPLF and LGIY…APFL.

This sequence belongs to the complex I NdhL subunit family. NDH-1 can be composed of about 15 different subunits; different subcomplexes with different compositions have been identified which probably have different functions.

It localises to the cellular thylakoid membrane. The enzyme catalyses a plastoquinone + NADH + (n+1) H(+)(in) = a plastoquinol + NAD(+) + n H(+)(out). It carries out the reaction a plastoquinone + NADPH + (n+1) H(+)(in) = a plastoquinol + NADP(+) + n H(+)(out). NDH-1 shuttles electrons from an unknown electron donor, via FMN and iron-sulfur (Fe-S) centers, to quinones in the respiratory and/or the photosynthetic chain. The immediate electron acceptor for the enzyme in this species is believed to be plastoquinone. Couples the redox reaction to proton translocation, and thus conserves the redox energy in a proton gradient. Cyanobacterial NDH-1 also plays a role in inorganic carbon-concentration. The polypeptide is NAD(P)H-quinone oxidoreductase subunit L (Synechococcus sp. (strain WH7803)).